Here is a 318-residue protein sequence, read N- to C-terminus: Putative olfactory receptor 2W6 (318 aa).

The Extracellular portion of the chain corresponds to Met1–Leu31. Residues Ile32–Val52 traverse the membrane as a helical segment. Residues Leu53–Thr63 lie on the Cytoplasmic side of the membrane. The chain crosses the membrane as a helical span at residues Pro64–Ile84. Topologically, residues Pro85 to Cys103 are extracellular. Cys103 and Cys185 form a disulfide bridge. The chain crosses the membrane as a helical span at residues Ala104–Met124. At Ala125–Arg145 the chain is on the cytoplasmic side. The chain crosses the membrane as a helical span at residues Leu146–Ala166. Residues Pro167–Glu202 lie on the Extracellular side of the membrane. Residues Ala203–Ser223 traverse the membrane as a helical segment. At Tyr224 to Asn245 the chain is on the cytoplasmic side. Residues Thr246–Leu266 form a helical membrane-spanning segment. The Extracellular segment spans residues Gln267 to Gly277. A helical membrane pass occupies residues Lys278–Leu298. Over Arg299 to Ile318 the chain is Cytoplasmic.

Belongs to the G-protein coupled receptor 1 family.

The protein resides in the cell membrane. Functionally, odorant receptor. The protein is Putative olfactory receptor 2W6 (OR2W6P) of Homo sapiens (Human).